The chain runs to 380 residues: Probable protein phosphatase 2C 2 (380 aa).

A PPM-type phosphatase domain is found at 122–376 (GYSVYCKRGK…DDISVMLIQL (255 aa)). Residues aspartate 158, glycine 159, aspartate 321, and aspartate 367 each coordinate Mn(2+).

The protein belongs to the PP2C family. Mg(2+) serves as cofactor. The cofactor is Mn(2+).

The enzyme catalyses O-phospho-L-seryl-[protein] + H2O = L-seryl-[protein] + phosphate. It catalyses the reaction O-phospho-L-threonyl-[protein] + H2O = L-threonyl-[protein] + phosphate. The polypeptide is Probable protein phosphatase 2C 2 (Arabidopsis thaliana (Mouse-ear cress)).